A 371-amino-acid chain; its full sequence is Ferrochelatase (371 aa).

H218 and E299 together coordinate Fe cation.

It belongs to the ferrochelatase family.

The protein resides in the cytoplasm. The catalysed reaction is heme b + 2 H(+) = protoporphyrin IX + Fe(2+). The protein operates within porphyrin-containing compound metabolism; protoheme biosynthesis; protoheme from protoporphyrin-IX: step 1/1. Catalyzes the ferrous insertion into protoporphyrin IX. The polypeptide is Ferrochelatase (Cupriavidus metallidurans (strain ATCC 43123 / DSM 2839 / NBRC 102507 / CH34) (Ralstonia metallidurans)).